Here is a 63-residue protein sequence, read N- to C-terminus: Small ribosomal subunit protein bS21 (63 aa).

The protein belongs to the bacterial ribosomal protein bS21 family.

This chain is Small ribosomal subunit protein bS21, found in Porphyromonas gingivalis (strain ATCC 33277 / DSM 20709 / CIP 103683 / JCM 12257 / NCTC 11834 / 2561).